Reading from the N-terminus, the 227-residue chain is NAD(P)H-quinone oxidoreductase subunit K, chloroplastic (227 aa).

Cysteine 43, cysteine 44, cysteine 108, and cysteine 139 together coordinate [4Fe-4S] cluster.

This sequence belongs to the complex I 20 kDa subunit family. NDH is composed of at least 16 different subunits, 5 of which are encoded in the nucleus. [4Fe-4S] cluster serves as cofactor.

It is found in the plastid. It localises to the chloroplast thylakoid membrane. The enzyme catalyses a plastoquinone + NADH + (n+1) H(+)(in) = a plastoquinol + NAD(+) + n H(+)(out). It catalyses the reaction a plastoquinone + NADPH + (n+1) H(+)(in) = a plastoquinol + NADP(+) + n H(+)(out). Functionally, NDH shuttles electrons from NAD(P)H:plastoquinone, via FMN and iron-sulfur (Fe-S) centers, to quinones in the photosynthetic chain and possibly in a chloroplast respiratory chain. The immediate electron acceptor for the enzyme in this species is believed to be plastoquinone. Couples the redox reaction to proton translocation, and thus conserves the redox energy in a proton gradient. In Spinacia oleracea (Spinach), this protein is NAD(P)H-quinone oxidoreductase subunit K, chloroplastic.